Consider the following 930-residue polypeptide: Kinesin-like protein KIN-7J (930 aa).

A Kinesin motor domain is found at 9 to 273 (KILVSVRVRP…TLGTVIRKLR (265 aa)). Residue 95 to 102 (GQTSSGKT) coordinates ATP. 2 disordered regions span residues 449-569 (LKNS…IGTD) and 655-686 (MQTK…SLKD). The segment covering 459–468 (SVEAQESQES) has biased composition (low complexity). Basic and acidic residues-rich tracts occupy residues 473–482 (EQMKNEERKM) and 533–558 (AKLD…KDCN). Low complexity predominate over residues 666 to 681 (TSSISFDSGSSTSIDT). Residue Lys-805 forms a Glycyl lysine isopeptide (Lys-Gly) (interchain with G-Cter in ubiquitin) linkage.

This sequence belongs to the TRAFAC class myosin-kinesin ATPase superfamily. Kinesin family. KIN-7 subfamily.

This is Kinesin-like protein KIN-7J from Arabidopsis thaliana (Mouse-ear cress).